The primary structure comprises 248 residues: DNA polymerase sliding clamp (248 aa).

This sequence belongs to the PCNA family. In terms of assembly, homotrimer. The subunits circularize to form a toroid; DNA passes through its center. Replication factor C (RFC) is required to load the toroid on the DNA.

Sliding clamp subunit that acts as a moving platform for DNA processing. Responsible for tethering the catalytic subunit of DNA polymerase and other proteins to DNA during high-speed replication. The chain is DNA polymerase sliding clamp from Cenarchaeum symbiosum (strain A).